Reading from the N-terminus, the 598-residue chain is Aspartate--tRNA(Asp/Asn) ligase (598 aa).

An L-aspartate-binding site is contributed by Glu177. Residues 201–204 (QLFK) form an aspartate region. An L-aspartate-binding site is contributed by Arg223. Residues 223 to 225 (RDE) and Gln232 contribute to the ATP site. Residue His456 coordinates L-aspartate. An ATP-binding site is contributed by Glu493. An L-aspartate-binding site is contributed by Arg500. 545 to 548 (GLDR) lines the ATP pocket.

The protein belongs to the class-II aminoacyl-tRNA synthetase family. Type 1 subfamily. Homodimer.

The protein localises to the cytoplasm. The enzyme catalyses tRNA(Asx) + L-aspartate + ATP = L-aspartyl-tRNA(Asx) + AMP + diphosphate. In terms of biological role, aspartyl-tRNA synthetase with relaxed tRNA specificity since it is able to aspartylate not only its cognate tRNA(Asp) but also tRNA(Asn). Reaction proceeds in two steps: L-aspartate is first activated by ATP to form Asp-AMP and then transferred to the acceptor end of tRNA(Asp/Asn). The polypeptide is Aspartate--tRNA(Asp/Asn) ligase (Prochlorococcus marinus (strain MIT 9215)).